The following is a 116-amino-acid chain: Secreted RxLR effector protein 9 (116 aa).

An N-terminal signal peptide occupies residues 1 to 17 (MRLIYIFMVSIVTTLHA). Residues 49–64 (RILRGTDGNVNREQER) carry the RxLR-dEER motif.

This sequence belongs to the RxLR effector family.

Its subcellular location is the secreted. The protein resides in the host cytoplasm. The protein localises to the host nucleus. Effector that acts as a broad suppressor of cell death to interrupt plant immunity. Inhibits cell death induced by cell death-inducing proteins, including the PAMP elicitor INF1 from P.infestans. The chain is Secreted RxLR effector protein 9 from Plasmopara viticola (Downy mildew of grapevine).